Here is a 640-residue protein sequence, read N- to C-terminus: Threonine--tRNA ligase (640 aa).

One can recognise a TGS domain in the interval 1 to 61 (MPTITLPDGS…ENDASLQIIT (61 aa)). A catalytic region spans residues 242–533 (DHRKIGKRLG…LIEHYEGAFP (292 aa)). Residues Cys333, His384, and His510 each contribute to the Zn(2+) site.

This sequence belongs to the class-II aminoacyl-tRNA synthetase family. As to quaternary structure, homodimer. Zn(2+) is required as a cofactor.

It is found in the cytoplasm. It carries out the reaction tRNA(Thr) + L-threonine + ATP = L-threonyl-tRNA(Thr) + AMP + diphosphate + H(+). Catalyzes the attachment of threonine to tRNA(Thr) in a two-step reaction: L-threonine is first activated by ATP to form Thr-AMP and then transferred to the acceptor end of tRNA(Thr). Also edits incorrectly charged L-seryl-tRNA(Thr). This Pseudomonas syringae pv. syringae (strain B728a) protein is Threonine--tRNA ligase.